The sequence spans 128 residues: Ribonuclease P protein component (128 aa).

The protein belongs to the RnpA family. In terms of assembly, consists of a catalytic RNA component (M1 or rnpB) and a protein subunit.

The catalysed reaction is Endonucleolytic cleavage of RNA, removing 5'-extranucleotides from tRNA precursor.. RNaseP catalyzes the removal of the 5'-leader sequence from pre-tRNA to produce the mature 5'-terminus. It can also cleave other RNA substrates such as 4.5S RNA. The protein component plays an auxiliary but essential role in vivo by binding to the 5'-leader sequence and broadening the substrate specificity of the ribozyme. The protein is Ribonuclease P protein component of Prochlorococcus marinus (strain NATL1A).